A 1937-amino-acid polypeptide reads, in one-letter code: Myosin-8 (1937 aa).

The Myosin N-terminal SH3-like domain maps to 35 to 84; that stretch reads DAKTSVFVAEPKESYVKSTIQSKEGGKVTVKTEGGATLTVREDQVFPMNP. 2 positions are modified to phosphothreonine: T66 and T71. The 694-residue stretch at 88–781 folds into the Myosin motor domain; that stretch reads DKIEDMAMMT…LLGLLEEMRD (694 aa). Position 132 is an N6,N6,N6-trimethyllysine (K132). Residue 181 to 188 participates in ATP binding; that stretch reads GESGAGKT. A Phosphotyrosine modification is found at Y389. S392 carries the post-translational modification Phosphoserine. The residue at position 419 (T419) is a Phosphothreonine. A Phosphotyrosine modification is found at Y424. S625 carries the phosphoserine modification. The tract at residues 658-680 is actin-binding; it reads LNKLMTNLRSTHPHFVRCIIPNE. H756 bears the Pros-methylhistidine mark. Residues 760–774 form an actin-binding region; the sequence is KFGHTKVFFKAGLLG. Positions 781–813 constitute an IQ domain; sequence DEKLAQIITRTQAVCRGFLMRVEYQKMLQRREA. Positions 842-1937 form a coiled coil; that stretch reads LLKSAETEKE…REVHTKISAE (1096 aa). S1091 and S1095 each carry phosphoserine. Positions 1126-1146 are disordered; it reads EAERASRAKAEKQRSDLSREL. Basic and acidic residues predominate over residues 1127 to 1146; it reads AERASRAKAEKQRSDLSREL. Phosphoserine occurs at positions 1161, 1236, 1242, and 1260. 2 positions are modified to phosphothreonine: T1264 and T1285. S1291, S1302, and S1305 each carry phosphoserine. At Y1463 the chain carries Phosphotyrosine. T1466 carries the phosphothreonine modification. Phosphoserine is present on S1473. Residue Y1491 is modified to Phosphotyrosine. S1494 bears the Phosphoserine mark. A Phosphothreonine modification is found at T1500. S1513 is subject to Phosphoserine. T1516 carries the post-translational modification Phosphothreonine. Phosphoserine is present on residues S1553, S1573, S1602, S1713, and S1725. T1729 bears the Phosphothreonine mark. S1738 bears the Phosphoserine mark.

This sequence belongs to the TRAFAC class myosin-kinesin ATPase superfamily. Myosin family. Muscle myosin is a hexameric protein that consists of 2 heavy chain subunits (MHC), 2 alkali light chain subunits (MLC) and 2 regulatory light chain subunits (MLC-2).

Its subcellular location is the cytoplasm. It is found in the myofibril. In terms of biological role, muscle contraction. The sequence is that of Myosin-8 (MYH8) from Homo sapiens (Human).